Reading from the N-terminus, the 549-residue chain is Glucose-6-phosphate isomerase (549 aa).

Glutamate 355 serves as the catalytic Proton donor. Catalysis depends on residues histidine 386 and lysine 514.

This sequence belongs to the GPI family.

Its subcellular location is the cytoplasm. It carries out the reaction alpha-D-glucose 6-phosphate = beta-D-fructose 6-phosphate. It participates in carbohydrate biosynthesis; gluconeogenesis. Its pathway is carbohydrate degradation; glycolysis; D-glyceraldehyde 3-phosphate and glycerone phosphate from D-glucose: step 2/4. Catalyzes the reversible isomerization of glucose-6-phosphate to fructose-6-phosphate. The protein is Glucose-6-phosphate isomerase of Salmonella enteritidis PT4 (strain P125109).